A 419-amino-acid chain; its full sequence is Phosphatidylcholine:ceramide cholinephosphotransferase 1 (419 aa).

In terms of domain architecture, SAM spans 13–76 (WSPKKVADWL…LDMIETLKME (64 aa)). Serine 14 carries the phosphoserine modification. Transmembrane regions (helical) follow at residues 142-162 (FLAF…ISVV), 190-210 (FSIC…QWLL), 221-241 (FFCI…VTTL), 282-302 (MCGD…YLFI), and 310-330 (LWWY…CILL). Histidine 291 is a catalytic residue. The Cytoplasmic segment spans residues 331-419 (AHDHYTVDVV…VKYSRLVNDT (89 aa)). Residues histidine 334 and aspartate 338 contribute to the active site.

It belongs to the sphingomyelin synthase family. As to expression, isoform 1 is widely expressed, isoform 2 shows a more narrow distribution and isoform 3 is detected only in testis and heart.

Its subcellular location is the golgi apparatus membrane. It carries out the reaction an N-acylsphing-4-enine + a 1,2-diacyl-sn-glycero-3-phosphocholine = a sphingomyelin + a 1,2-diacyl-sn-glycerol. The enzyme catalyses 1-(9Z-octadecenoyl)-2-acyl-sn-3-glycerol + a sphingomyelin = a 1-(9Z-octadecenoyl)-2-acyl-sn-glycero-3-phosphocholine + an N-acylsphing-4-enine. The catalysed reaction is N-hexadecanoylsphinganine + a 1,2-diacyl-sn-glycero-3-phosphocholine = N-hexadecanoyl-sphinganine-1-phosphocholine + a 1,2-diacyl-sn-glycerol. It catalyses the reaction N-hexadecanoyl-(4R)-hydroxysphinganine + a 1,2-diacyl-sn-glycero-3-phosphocholine = N-hexadecanoyl-(4R)-hydroxysphinganine-phosphocholine + a 1,2-diacyl-sn-glycerol. It carries out the reaction an N-acylsphing-4-enine + a 1,2-diacyl-sn-glycero-3-phosphoethanolamine = an N-acylsphing-4-enine 1-phosphoethanolamine + a 1,2-diacyl-sn-glycerol. It functions in the pathway sphingolipid metabolism. Functionally, major sphingomyelin synthase at the Golgi apparatus. Catalyzes the reversible transfer of phosphocholine moiety in sphingomyelin biosynthesis: in the forward reaction transfers phosphocholine head group of phosphatidylcholine (PC) on to ceramide (CER) to form ceramide phosphocholine (sphingomyelin, SM) and diacylglycerol (DAG) as by-product, and in the reverse reaction transfers phosphocholine from SM to DAG to form PC and CER. The direction of the reaction depends on the levels of CER and DAG in Golgi membranes. Converts the newly synthesized CER, that is transported from the endoplasmic reticulum to the trans-Golgi by the Cer transport protein (CERT), to SM. Can form a heteromeric complex with glucosylceramide synthase (GCS) increasing SMS activity and reducing glucosylceramide synthesis, a critical mechanism that controls the metabolic fate of CER in the Golgi. Does not use free phosphorylcholine or CDP-choline as donor. Can also transfer phosphoethanolamine head group of phosphatidylethanolamine (PE) on to CER to form ceramide phosphoethanolamine (CPE). Regulates receptor-mediated signal transduction via mitogenic DAG and proapoptotic CER, as well as via SM, a structural component of membrane rafts that serve as platforms for signal transduction and protein sorting. Plays a role in secretory transport via regulation of DAG pool at the Golgi apparatus and its downstream effects on PRKD1. In terms of biological role, (Microbial infection) Contributes to the brain SM production for Japanese encephalitis virus attachment and infection. This is Phosphatidylcholine:ceramide cholinephosphotransferase 1 (Sgms1) from Mus musculus (Mouse).